Reading from the N-terminus, the 182-residue chain is Homeobox protein pnx (182 aa).

Residues 1–34 (MHEETSNSTLQGKTSFSIADILDPAKFNGTRETR) are important for interaction with tle3a. The tract at residues 24–63 (PAKFNGTRETREISNNRESPKTTSPTQDPSAPNIANASAA) is disordered. The span at 29–43 (GTRETREISNNRESP) shows a compositional bias: basic and acidic residues. The span at 52–63 (PSAPNIANASAA) shows a compositional bias: low complexity. Residues 67 to 126 (SKRIRTAFTLDQLRILERSFQSSHYLSVFERHCIASALGLSETQVKIWFQNRRTKWKKEL) constitute a DNA-binding region (homeobox).

Belongs to the NK-1 homeobox family. Interacts with tle3a.

It localises to the nucleus. In terms of biological role, transcriptional repressor. Activity as a repressor is enhanced by binding to the corepressor tle3a. The chain is Homeobox protein pnx from Danio rerio (Zebrafish).